We begin with the raw amino-acid sequence, 1133 residues long: uncharacterized protein (1133 aa).

4 disordered regions span residues 33–83, 305–629, 679–723, and 736–817; these read QFED…NSSS, PVSN…NSNS, GKLD…SVKR, and IESP…SEEV. Residues 39–83 are compositionally biased toward low complexity; the sequence is NNNNSNNNNNNNNSNNNNSNNNENINRKTGSTLLSSSTSQLNSSS. Residues 40–308 constitute a DNA-binding region (NDT80); the sequence is NNNSNNNNNN…GHPTCNPVSN (269 aa). A compositionally biased stretch (polar residues) spans 305–316; the sequence is PVSNNPSTPGTP. Over residues 317 to 384 the composition is skewed to low complexity; that stretch reads ISNFDSSNNN…NNNSSGNSSS (68 aa). Residues 401-417 are compositionally biased toward polar residues; that stretch reads INSLSNHNSPHLTPIQY. Low complexity predominate over residues 418–452; it reads NNNNNNSNNNSNNNNNNNNNNNNSNNNNNNSNNNN. Polar residues predominate over residues 453-470; the sequence is HQFQSNNRIFKGNLSNPF. Low complexity-rich tracts occupy residues 473-615 and 686-714; these read NYSQ…GNNS and NNSN…NNNN. Polar residues predominate over residues 736 to 747; that stretch reads IESPQSYISSPT. The segment covering 757–771 has biased composition (pro residues); it reads QPQPQPQPQPQPQPQ. Positions 772–808 are enriched in low complexity; it reads PQSQSQSQSQSQSQSQSQSQSQSQPIQQIVQQQLSSP. The 112-residue stretch at 909 to 1020 folds into the Peptidase S74 domain; it reads SDKRVKENVK…KKVDNVCMEL (112 aa). Residues 1055 to 1075 form a helical membrane-spanning segment; that stretch reads IFIGIGVFTLFVIFGLVAVSI. Positions 1107-1133 are disordered; it reads SGSNSCYDSSSNSAIDTTTSTGSGSIK.

The protein resides in the membrane. This is an uncharacterized protein from Dictyostelium discoideum (Social amoeba).